We begin with the raw amino-acid sequence, 198 residues long: TATA-box-binding protein (198 aa).

A run of 2 repeats spans residues 14–90 (IENI…IKTL) and 105–181 (IQNI…FDKL).

The protein belongs to the TBP family.

General factor that plays a role in the activation of archaeal genes transcribed by RNA polymerase. Binds specifically to the TATA box promoter element which lies close to the position of transcription initiation. The polypeptide is TATA-box-binding protein (Saccharolobus shibatae (strain ATCC 51178 / DSM 5389 / JCM 8931 / NBRC 15437 / B12) (Sulfolobus shibatae)).